We begin with the raw amino-acid sequence, 482 residues long: Auxin transporter-like protein 4 (482 aa).

The Cytoplasmic portion of the chain corresponds to 1-59 (MLSQNQAEEAIVTNMNETEQEGGSSLEEIAEDQSMFNFKSFLWHGGSVWDAWFSCASNQ). The chain crosses the membrane as a helical span at residues 60 to 77 (VAQVLLTLPYSFSQLGMV). Over 78-79 (SG) the chain is Extracellular. A helical membrane pass occupies residues 80–100 (IVFQIFYGLIGSWTAYLISVL). Over 101–135 (YVEYRARKEKENVNFKNHVIQWFEVLDGLLGRYWK) the chain is Cytoplasmic. The helical transmembrane segment at 136–156 (ALGLAFNCTFLLFGSVIQLIA) threads the bilayer. The Extracellular portion of the chain corresponds to 157-172 (CASNIYYINDKLDKRT). Residues 173–193 (WTYIFGACCATTVFIPSFHNY) traverse the membrane as a helical segment. The Cytoplasmic segment spans residues 194 to 196 (RIW). Residues 197 to 217 (SFLGLGMTTYTAWYMAIAAIV) form a helical membrane-spanning segment. Topologically, residues 218–232 (NGQIENVVHSGPTKL) are extracellular. Residues 233–253 (VLYFTGATNILYTFGGHAVTV) traverse the membrane as a helical segment. Residues 254–266 (EIMHAMWKPQKFK) lie on the Cytoplasmic side of the membrane. A helical transmembrane segment spans residues 267-287 (YIYFLATLYVFTLTIPSAVAV). Residues 288 to 314 (YWAFGDELLNHSNAFSLLPKNGFRDAA) lie on the Extracellular side of the membrane. N-linked (GlcNAc...) asparagine glycosylation occurs at Asn-297. A helical transmembrane segment spans residues 315-335 (VILMLIHQFITFGFACTPLYF). Residues 336–356 (VWEKVIGMHDTKSICLRALVR) lie on the Cytoplasmic side of the membrane. Residues 357-377 (LPVVIPIWFLAIIFPFFGPIN) form a helical membrane-spanning segment. A topological domain (extracellular) is located at residue Ser-378. A helical membrane pass occupies residues 379 to 399 (AVGALLVTFTVYIIPALAHML). Topologically, residues 400–422 (TYRTASARKNAVEKPPSFLPSWT) are cytoplasmic. Residues 423–443 (AVYVLNAFIVVWVLVVGFGFG) traverse the membrane as a helical segment. At 444-482 (GWASMTNFIRQIDTFGLFAKCYQCKPPTPPQAPSPHARH) the chain is on the extracellular side.

Belongs to the amino acid/polyamine transporter 2 family. Amino acid/auxin permease (AAAP) (TC 2.A.18.1) subfamily. In terms of tissue distribution, shoots and roots of nodulating plants, at low levels.

The protein resides in the cell membrane. Functionally, carrier protein involved in proton-driven auxin influx. Mediates the formation of auxin gradient from developing leaves (site of auxin biosynthesis) to tips by contributing to the loading of auxin in vascular tissues and facilitating acropetal (base to tip) auxin transport within inner tissues of the root apex, and basipetal (tip to base) auxin transport within outer tissues of the root apex. May be involved in lateral roots and nodules formation. In Medicago truncatula (Barrel medic), this protein is Auxin transporter-like protein 4 (LAX4).